Here is a 1021-residue protein sequence, read N- to C-terminus: INO80 complex subunit D (1021 aa).

Lysine 87 is covalently cross-linked (Glycyl lysine isopeptide (Lys-Gly) (interchain with G-Cter in SUMO2)). Serine 132 is modified (phosphoserine). 5 disordered regions span residues 194 to 239 (FSTP…PMQG), 514 to 570 (RGDN…SMPT), 808 to 844 (RQQYSSDHSHSSPHGSHYDSEHVPSPYSDHITSPHTS), 911 to 940 (SLSTPPTTSNSETTQPAFATVTPSSSSVLP), and 976 to 1021 (QLSS…PSPN). A compositionally biased stretch (polar residues) spans 224-239 (VCKSPQPQNTSLPMQG). Basic residues predominate over residues 520 to 554 (KVQHQQQRKPRKKTKPPALTKKHKKKRRRGPRRPQ). A compositionally biased stretch (low complexity) spans 911–926 (SLSTPPTTSNSETTQP). Polar residues predominate over residues 931–940 (VTPSSSSVLP). Residues 995–1014 (APPTGFTATGATATSTNNAS) are compositionally biased toward low complexity.

Belongs to the INO80D family. In terms of assembly, component of the chromatin remodeling INO80 complex; specifically part of a complex module associated with the N-terminus of INO80.

Its subcellular location is the nucleus. Its function is as follows. Putative regulatory component of the chromatin remodeling INO80 complex which is involved in transcriptional regulation, DNA replication and probably DNA repair. This is INO80 complex subunit D from Mus musculus (Mouse).